The chain runs to 396 residues: Ornithine aminotransferase 2 (396 aa).

Lys-255 is subject to N6-(pyridoxal phosphate)lysine.

Belongs to the class-III pyridoxal-phosphate-dependent aminotransferase family. OAT subfamily. Pyridoxal 5'-phosphate is required as a cofactor.

The protein localises to the cytoplasm. It carries out the reaction a 2-oxocarboxylate + L-ornithine = L-glutamate 5-semialdehyde + an L-alpha-amino acid. It functions in the pathway amino-acid biosynthesis; L-proline biosynthesis; L-glutamate 5-semialdehyde from L-ornithine: step 1/1. Catalyzes the interconversion of ornithine to glutamate semialdehyde. This Staphylococcus aureus (strain MRSA252) protein is Ornithine aminotransferase 2.